The primary structure comprises 581 residues: Meiotic PUF family protein 1 (581 aa).

Residues 225-580 (FPNGTTEPFE…RIAALVEKSK (356 aa)) form the PUM-HD domain. Pumilio repeat units lie at residues 291–326 (TILPFSVTLMKNKFGNFLIQKCFEYSTEAQLQSFSY), 327–362 (FLKKHVKELSIDAFGSHVLQKSLEIYPERFTNNLIE), 363–398 (ELIECLPATLMQRHSCHVWQKFFETRRKSLVDGIFD), 403–438 (KMQGKWLQVSVSEMGSLVVQTIFENCKEKDKRTCLD), 439–474 (EIINNMDQIICGQWGNWVIQHIIEHGSEPDKQRILN), 475–510 (SLLKEVESYSTNRYASKVVERALRVCHVTFFDRYVK), 518–554 (ELPTIFLQEIASNQYGNYIVQYLLQVATPSQINLMAE), and 555–581 (HLKKHMVSLRGHKYGQRIAALVEKSKS).

Its function is as follows. RNA-binding protein essential for meiotic progression. The sequence is that of Meiotic PUF family protein 1 (mpf1) from Schizosaccharomyces pombe (strain 972 / ATCC 24843) (Fission yeast).